Here is a 150-residue protein sequence, read N- to C-terminus: Large ribosomal subunit protein bL9 (150 aa).

This sequence belongs to the bacterial ribosomal protein bL9 family.

In terms of biological role, binds to the 23S rRNA. In Wolinella succinogenes (strain ATCC 29543 / DSM 1740 / CCUG 13145 / JCM 31913 / LMG 7466 / NCTC 11488 / FDC 602W) (Vibrio succinogenes), this protein is Large ribosomal subunit protein bL9.